We begin with the raw amino-acid sequence, 433 residues long: Probable D-serine dehydratase (433 aa).

N6-(pyridoxal phosphate)lysine is present on Lys110.

This sequence belongs to the serine/threonine dehydratase family. DsdA subfamily. Pyridoxal 5'-phosphate is required as a cofactor.

The enzyme catalyses D-serine = pyruvate + NH4(+). The sequence is that of Probable D-serine dehydratase from Oenococcus oeni (strain ATCC BAA-331 / PSU-1).